Reading from the N-terminus, the 469-residue chain is Dynein axonemal assembly factor 11 (469 aa).

LRR repeat units lie at residues 20 to 43 (IFSL…DKWC), 44 to 65 (RELK…VSKL), 66 to 89 (KKLE…GCES), and 90 to 110 (LQKL…NSLQ). The LRRCT domain maps to 114–135 (HLRELYLVGNPCAEYEGYRQYV). 2 stretches are compositionally biased toward basic and acidic residues: residues 179–213 (KRAA…RRWY) and 261–286 (SRLE…ELKK). Disordered stretches follow at residues 179–290 (KRAA…KPPR) and 436–469 (KTQA…PPLM).

This sequence belongs to the tilB family.

It localises to the cytoplasm. It is found in the cell projection. Its subcellular location is the cilium. The protein localises to the dynein axonemal particle. The protein resides in the flagellum. Functionally, involved in dynein arm assembly, is important for expression and transporting outer dynein arm (ODA) proteins from the cytoplasm to the cilia. This chain is Dynein axonemal assembly factor 11 (dnaaf11), found in Xenopus laevis (African clawed frog).